The primary structure comprises 987 residues: Ephrin type-B receptor 4 (987 aa).

The N-terminal stretch at 1 to 15 (MELRALLCWASLATA) is a signal peptide. Residues 16–539 (LEETLLNTKL…ESESWREQLA (524 aa)) are Extracellular-facing. One can recognise an Eph LBD domain in the interval 17-202 (EETLLNTKLE…FYKKCSWLIT (186 aa)). Disulfide bonds link Cys-61-Cys-184 and Cys-97-Cys-107. N-linked (GlcNAc...) asparagine glycans are attached at residues Asn-203, Asn-335, and Asn-426. Fibronectin type-III domains are found at residues 323–432 (PPSA…TDRE) and 436–529 (AVSD…TQLD). A helical transmembrane segment spans residues 540–560 (LIAGTAVVGVVLVLVVVIIAV). Residues 561–987 (LCLRKQSNGR…GGTGGPAQQF (427 aa)) are Cytoplasmic-facing. Positions 615 to 899 (VKIEEVIGAG…ENGGASHPLL (285 aa)) constitute a Protein kinase domain. Residues 621 to 629 (IGAGEFGEV) and Lys-647 contribute to the ATP site. Asp-740 functions as the Proton acceptor in the catalytic mechanism. Residues Ser-769, Ser-770, Ser-911, and Ser-943 each carry the phosphoserine modification. One can recognise an SAM domain in the interval 907–971 (SAFGSVGEWL…LASVQHMKSQ (65 aa)). Residues 965–987 (VQHMKSQAKPGAPGGTGGPAQQF) are disordered. Residues 976–987 (APGGTGGPAQQF) are compositionally biased toward gly residues. The PDZ-binding motif lies at 985 to 987 (QQF).

The protein belongs to the protein kinase superfamily. Tyr protein kinase family. Ephrin receptor subfamily. In terms of assembly, heterotetramer upon binding of the ligand. The heterotetramer is composed of an ephrin dimer and a receptor dimer. Oligomerization is probably required to induce biological responses. Interacts with RASA1; the interaction depends on EPHB4 tyrosine-phosphorylation. In terms of processing, phosphorylated; autophosphorylation is stimulated by EFNB2. As to expression, expressed in various organ systems, including lung, liver, kidney, intestine, muscle and heart. Expressed in myogenic progenitor cells.

The protein resides in the cell membrane. It catalyses the reaction L-tyrosyl-[protein] + ATP = O-phospho-L-tyrosyl-[protein] + ADP + H(+). Receptor tyrosine kinase which binds promiscuously transmembrane ephrin-B family ligands residing on adjacent cells, leading to contact-dependent bidirectional signaling into neighboring cells. The signaling pathway downstream of the receptor is referred to as forward signaling while the signaling pathway downstream of the ephrin ligand is referred to as reverse signaling. Together with its cognate ligand/functional ligand EFNB2 it is involved in the regulation of cell adhesion and migration, and plays a central role in heart morphogenesis, angiogenesis and blood vessel remodeling and permeability. EPHB4-mediated forward signaling controls cellular repulsion and segregation from EFNB2-expressing cells. The sequence is that of Ephrin type-B receptor 4 (Ephb4) from Mus musculus (Mouse).